Consider the following 321-residue polypeptide: D-alanine--D-alanine ligase (321 aa).

The ATP-grasp domain maps to 121-315; that stretch reads RSCFLKNNIN…FTNLIEEIIK (195 aa). 148–199 provides a ligand contact to ATP; it reads MKRPYVIKPLKQGSSIGVEVIFEEDDFHFIDYDFPYGEDIIIEQYIQGQELQ. Mg(2+) is bound by residues E268, E282, and N284.

The protein belongs to the D-alanine--D-alanine ligase family. Mg(2+) is required as a cofactor. It depends on Mn(2+) as a cofactor.

The protein localises to the cytoplasm. The enzyme catalyses 2 D-alanine + ATP = D-alanyl-D-alanine + ADP + phosphate + H(+). The protein operates within cell wall biogenesis; peptidoglycan biosynthesis. Its function is as follows. Cell wall formation. This is D-alanine--D-alanine ligase from Rickettsia typhi (strain ATCC VR-144 / Wilmington).